A 372-amino-acid polypeptide reads, in one-letter code: NAD(P)H-quinone oxidoreductase subunit 1 (372 aa).

A run of 9 helical transmembrane segments spans residues 27-47, 65-85, 97-117, 128-148, 176-196, 204-224, 254-274, 308-328, and 347-367; these read LLWL…GVLV, PEYI…KLIF, WLFT…YIIV, LAMG…GLLM, LALA…VEIV, ILSW…IAAL, FALF…LVSV, VLGI…AILL, and FLLP…LAFP.

It belongs to the complex I subunit 1 family. NDH-1 is composed of at least 11 different subunits.

Its subcellular location is the cellular thylakoid membrane. The catalysed reaction is a plastoquinone + NADH + (n+1) H(+)(in) = a plastoquinol + NAD(+) + n H(+)(out). It catalyses the reaction a plastoquinone + NADPH + (n+1) H(+)(in) = a plastoquinol + NADP(+) + n H(+)(out). Functionally, NDH-1 shuttles electrons from an unknown electron donor, via FMN and iron-sulfur (Fe-S) centers, to quinones in the respiratory and/or the photosynthetic chain. The immediate electron acceptor for the enzyme in this species is believed to be plastoquinone. Couples the redox reaction to proton translocation, and thus conserves the redox energy in a proton gradient. This Thermosynechococcus vestitus (strain NIES-2133 / IAM M-273 / BP-1) protein is NAD(P)H-quinone oxidoreductase subunit 1.